Consider the following 199-residue polypeptide: MELWIATGNKGKLAEYKQLLRELPDLKVFSQGDIASFTPRPEDGKTFEDNARIKAKTLRAVKNNVWVLGEDAGLVVEGLNGLPGIHSARYAGPKASDSENVSKLLKMITLRPMPNKNAKFVCTTVVYTPTGEEWVFNGEMKGTIASKPAGLHGFGYDPVFIPEGQTQTLAELGTGYKSLLSHRAMALKAFLEKLQTVNP.

7 to 12 (TGNKGK) lines the substrate pocket. Asp71 serves as the catalytic Proton acceptor. A Mg(2+)-binding site is contributed by Asp71. Residues Ala72, 154 to 157 (FGYD), Lys177, and 182 to 183 (HR) each bind substrate.

The protein belongs to the HAM1 NTPase family. As to quaternary structure, homodimer. The cofactor is Mg(2+).

It carries out the reaction XTP + H2O = XMP + diphosphate + H(+). The enzyme catalyses dITP + H2O = dIMP + diphosphate + H(+). The catalysed reaction is ITP + H2O = IMP + diphosphate + H(+). Its function is as follows. Pyrophosphatase that catalyzes the hydrolysis of nucleoside triphosphates to their monophosphate derivatives, with a high preference for the non-canonical purine nucleotides XTP (xanthosine triphosphate), dITP (deoxyinosine triphosphate) and ITP. Seems to function as a house-cleaning enzyme that removes non-canonical purine nucleotides from the nucleotide pool, thus preventing their incorporation into DNA/RNA and avoiding chromosomal lesions. The sequence is that of dITP/XTP pyrophosphatase from Bdellovibrio bacteriovorus (strain ATCC 15356 / DSM 50701 / NCIMB 9529 / HD100).